The chain runs to 165 residues: MSAVASVKDFVSSFMLTELLKGMALTGKYMFSRKITIQFPEEKTPLSPRFRGLHALRRYENGEERCIACKLCEAVCPALAITIESDVREDGSRRTSRYDIDLTKCIFCGFCEESCPVDSIVETHILEYHGEKRGDLYFTKEMLLAVGDRYENEIAANRAADAKYR.

2 consecutive 4Fe-4S ferredoxin-type domains span residues 57–86 and 96–125; these read RRYE…IESD and SRYD…ETHI. Residues cysteine 66, cysteine 69, cysteine 72, cysteine 76, cysteine 105, cysteine 108, cysteine 111, and cysteine 115 each contribute to the [4Fe-4S] cluster site.

Belongs to the complex I 23 kDa subunit family. In terms of assembly, NDH-1 is composed of 14 different subunits. Subunits NuoA, H, J, K, L, M, N constitute the membrane sector of the complex. [4Fe-4S] cluster serves as cofactor.

It is found in the cell inner membrane. The catalysed reaction is a quinone + NADH + 5 H(+)(in) = a quinol + NAD(+) + 4 H(+)(out). In terms of biological role, NDH-1 shuttles electrons from NADH, via FMN and iron-sulfur (Fe-S) centers, to quinones in the respiratory chain. The immediate electron acceptor for the enzyme in this species is believed to be ubiquinone. Couples the redox reaction to proton translocation (for every two electrons transferred, four hydrogen ions are translocated across the cytoplasmic membrane), and thus conserves the redox energy in a proton gradient. The protein is NADH-quinone oxidoreductase subunit I of Polaromonas naphthalenivorans (strain CJ2).